Consider the following 266-residue polypeptide: Ribonuclease 3 (266 aa).

The disordered stretch occupies residues 1 to 35 (MMDESADIKPVPTSEDVAAPSGTEPVAPAPKKKRA). The region spanning 43–171 (MAAIEQRLGH…VIGAVYLDGG (129 aa)) is the RNase III domain. A Mg(2+)-binding site is contributed by Glu-84. Residue Asp-88 is part of the active site. Positions 157 and 160 each coordinate Mg(2+). Glu-160 is an active-site residue. The DRBM domain maps to 196-265 (DPKTVLQEWA…ASAMIVREGV (70 aa)).

This sequence belongs to the ribonuclease III family. Homodimer. The cofactor is Mg(2+).

The protein resides in the cytoplasm. The catalysed reaction is Endonucleolytic cleavage to 5'-phosphomonoester.. Digests double-stranded RNA. Involved in the processing of primary rRNA transcript to yield the immediate precursors to the large and small rRNAs (23S and 16S). Processes some mRNAs, and tRNAs when they are encoded in the rRNA operon. Processes pre-crRNA and tracrRNA of type II CRISPR loci if present in the organism. In Nitrobacter winogradskyi (strain ATCC 25391 / DSM 10237 / CIP 104748 / NCIMB 11846 / Nb-255), this protein is Ribonuclease 3.